We begin with the raw amino-acid sequence, 619 residues long: 1-deoxy-D-xylulose-5-phosphate synthase (619 aa).

Thiamine diphosphate contacts are provided by residues H74 and G115–S117. Residue D146 participates in Mg(2+) binding. Thiamine diphosphate-binding positions include G147 to A148, N175, and Y285. N175 provides a ligand contact to Mg(2+). The segment at E289–C312 is disordered. Basic and acidic residues predominate over residues A302 to C312. Residue E365 coordinates thiamine diphosphate.

The protein belongs to the transketolase family. DXPS subfamily. Homodimer. Mg(2+) serves as cofactor. It depends on thiamine diphosphate as a cofactor.

It catalyses the reaction D-glyceraldehyde 3-phosphate + pyruvate + H(+) = 1-deoxy-D-xylulose 5-phosphate + CO2. The protein operates within metabolic intermediate biosynthesis; 1-deoxy-D-xylulose 5-phosphate biosynthesis; 1-deoxy-D-xylulose 5-phosphate from D-glyceraldehyde 3-phosphate and pyruvate: step 1/1. Functionally, catalyzes the acyloin condensation reaction between C atoms 2 and 3 of pyruvate and glyceraldehyde 3-phosphate to yield 1-deoxy-D-xylulose-5-phosphate (DXP). In Clostridium botulinum (strain Eklund 17B / Type B), this protein is 1-deoxy-D-xylulose-5-phosphate synthase.